The sequence spans 637 residues: Acetolactate synthase 2, chloroplastic (637 aa).

The transit peptide at 1 to 73 (MASFSFFGTI…SSKYAPNVPR (73 aa)) directs the protein to the chloroplast. The interval 35–69 (RRATRVSVSANSKKDQDRTASRRENPSTFSSKYAP) is disordered. Residues 46-59 (SKKDQDRTASRREN) show a composition bias toward basic and acidic residues. A thiamine diphosphate-binding site is contributed by Glu120. FAD is bound by residues Arg222, 329–350 (HGTV…FGVR), and 372–391 (DIDS…VCCD). Residues 462–542 (QHQMWAAQFY…VKVLLINNQH (81 aa)) are thiamine pyrophosphate binding. Mg(2+) is bound by residues Asp513 and Asn540.

Belongs to the TPP enzyme family. Mg(2+) serves as cofactor. The cofactor is thiamine diphosphate.

The protein localises to the plastid. It is found in the chloroplast. It carries out the reaction 2 pyruvate + H(+) = (2S)-2-acetolactate + CO2. Its pathway is amino-acid biosynthesis; L-isoleucine biosynthesis; L-isoleucine from 2-oxobutanoate: step 1/4. It participates in amino-acid biosynthesis; L-valine biosynthesis; L-valine from pyruvate: step 1/4. The protein is Acetolactate synthase 2, chloroplastic of Brassica napus (Rape).